Here is a 309-residue protein sequence, read N- to C-terminus: L-aminoadipate-semialdehyde dehydrogenase-phosphopantetheinyl transferase (309 aa).

CoA is bound by residues Arg-47, 86–91 (RTAKGK), and 108–111 (NISH). 2 residues coordinate Mg(2+): Asp-129 and Glu-181. 181–185 (ESFIK) provides a ligand contact to CoA. Ser-258 is subject to Phosphoserine.

It belongs to the P-Pant transferase superfamily. AcpS family. In terms of assembly, monomer. Mg(2+) serves as cofactor.

The protein localises to the cytoplasm. It is found in the cytosol. It carries out the reaction apo-[ACP] + CoA = holo-[ACP] + adenosine 3',5'-bisphosphate + H(+). The enzyme catalyses apo-[ACP] + acetyl-CoA = acetyl-[ACP] + adenosine 3',5'-bisphosphate + H(+). Functionally, catalyzes the post-translational modification of target proteins by phosphopantetheine. Can transfer the 4'-phosphopantetheine moiety from coenzyme A, regardless of whether the CoA is presented in the free thiol form or as an acetyl thioester, to a serine residue of a broad range of acceptors including the acyl carrier domain of FASN. The sequence is that of L-aminoadipate-semialdehyde dehydrogenase-phosphopantetheinyl transferase (AASDHPPT) from Pongo abelii (Sumatran orangutan).